Reading from the N-terminus, the 338-residue chain is Homeobox protein ceh-20 (338 aa).

The region spanning 4 to 187 (THPANLSELL…VMILRSRFLD (184 aa)) is the PBC domain. Residues 11 to 91 (ELLDAVLKIN…EGVAGPDKGG (81 aa)) are PBC-A. A PBC-B region spans residues 94-187 (GSDASGGDQA…VMILRSRFLD (94 aa)). A DNA-binding region (homeobox; TALE-type) is located at residues 188-250 (ARRKRRNFSK…NKRIRYKKNM (63 aa)).

This sequence belongs to the TALE/PBX homeobox family. In terms of assembly, interacts with Meis protein psa-3. Interacts with homeobox protein nob-1. Expressed in head dopaminergic neurons.

The protein resides in the nucleus. Its function is as follows. Transcription factor that binds to the 5'-TGATNNAT(G/T)(G/A)-3' PBC/Hox lineage enhancer region of sem-2 to promote cell fate specification in the postembryonic mesoderm (also known as the M lineage). Required for the M lineage-specific expression of the transcription factor, mls-2. Required for asymmetric division of the T hypodermal cell, probably acting via the regulation of asymmetric expression of Meis protein psa-3 in concert with homeobox protein nob-1 and the Wnt-MAPK pathway. Has a role in the mig-13 pathway to promote the guidance, migration and positioning of Q neuroblasts and their descendants along the anteroposterior body axis and the anterior migration of BDU interneurons. Also required for normal vulval formation. Plays a role in regulating gene expression in dopaminergic neurons, acting in midbody PDE neurons, and acting redundantly with ceh-40 in head neurons. May activate dopamine pathway genes in concert with ETS domain-containing protein ast-1, and homeobox proteins ceh-43 and ceh-40. This Caenorhabditis elegans protein is Homeobox protein ceh-20.